Consider the following 459-residue polypeptide: Probable 1,4-beta-D-glucan cellobiohydrolase C (459 aa).

The first 18 residues, 1–18 (MHYPLSLALAFLPFGIQA), serve as a signal peptide directing secretion. One can recognise a CBM1 domain in the interval 19–54 (QQTLWGQCGGQGYSGATSCVAGATCATVNEYYAQCT). 2 disulfides stabilise this stretch: C26–C43 and C37–C53. The thr-rich linker stretch occupies residues 54 to 94 (TPAAGTSSATTLKTTTSSTTAAVTTTTTTQSPTGSASPTTT). A disordered region spans residues 76 to 97 (VTTTTTTQSPTGSASPTTTASA). The segment at 95–459 (ASASGNPFSG…QLLTNANPAF (365 aa)) is catalytic. D189 is a catalytic residue. C190 and C249 form a disulfide bridge. The active-site Proton donor is D235. Residue N303 is glycosylated (N-linked (GlcNAc...) asparagine). An intrachain disulfide couples C381 to C428. The Nucleophile role is filled by D414.

It belongs to the glycosyl hydrolase 6 (cellulase B) family.

The protein resides in the secreted. The catalysed reaction is Hydrolysis of (1-&gt;4)-beta-D-glucosidic linkages in cellulose and cellotetraose, releasing cellobiose from the non-reducing ends of the chains.. Functionally, the biological conversion of cellulose to glucose generally requires three types of hydrolytic enzymes: (1) Endoglucanases which cut internal beta-1,4-glucosidic bonds; (2) Exocellobiohydrolases that cut the disaccharide cellobiose from the non-reducing end of the cellulose polymer chain; (3) Beta-1,4-glucosidases which hydrolyze the cellobiose and other short cello-oligosaccharides to glucose. The chain is Probable 1,4-beta-D-glucan cellobiohydrolase C (cbhC) from Aspergillus niger (strain ATCC MYA-4892 / CBS 513.88 / FGSC A1513).